Here is a 268-residue protein sequence, read N- to C-terminus: Elongation factor Ts (268 aa).

Residues 81 to 84 (TDFV) form an involved in Mg(2+) ion dislocation from EF-Tu region.

The protein belongs to the EF-Ts family.

It is found in the cytoplasm. Functionally, associates with the EF-Tu.GDP complex and induces the exchange of GDP to GTP. It remains bound to the aminoacyl-tRNA.EF-Tu.GTP complex up to the GTP hydrolysis stage on the ribosome. In Buchnera aphidicola subsp. Acyrthosiphon pisum (strain 5A), this protein is Elongation factor Ts.